Here is a 325-residue protein sequence, read N- to C-terminus: Tagatose 1,6-diphosphate aldolase (325 aa).

This sequence belongs to the aldolase LacD family.

The enzyme catalyses D-tagatofuranose 1,6-bisphosphate = D-glyceraldehyde 3-phosphate + dihydroxyacetone phosphate. It functions in the pathway carbohydrate metabolism; D-tagatose 6-phosphate degradation; D-glyceraldehyde 3-phosphate and glycerone phosphate from D-tagatose 6-phosphate: step 2/2. The sequence is that of Tagatose 1,6-diphosphate aldolase from Staphylococcus haemolyticus (strain JCSC1435).